The primary structure comprises 502 residues: Glutamate--tRNA ligase (502 aa).

A 'HIGH' region motif is present at residues 12-22; it reads PSPTGYLHVGG. The 'KMSKS' region motif lies at 259–263; that stretch reads KLSKR. ATP is bound at residue Lys262.

It belongs to the class-I aminoacyl-tRNA synthetase family. Glutamate--tRNA ligase type 1 subfamily. In terms of assembly, monomer.

The protein resides in the cytoplasm. The catalysed reaction is tRNA(Glu) + L-glutamate + ATP = L-glutamyl-tRNA(Glu) + AMP + diphosphate. Its function is as follows. Catalyzes the attachment of glutamate to tRNA(Glu) in a two-step reaction: glutamate is first activated by ATP to form Glu-AMP and then transferred to the acceptor end of tRNA(Glu). The protein is Glutamate--tRNA ligase of Pelodictyon phaeoclathratiforme (strain DSM 5477 / BU-1).